Reading from the N-terminus, the 557-residue chain is Membrane protein insertase YidC (557 aa).

Residues 7–27 (ILLVALAVVSYLLVLQWNQDY) form a helical membrane-spanning segment. Residues 42–77 (ASPALPETVPGDSSTSADVPTAGSGNQVPDSAASTA) form a disordered region. The span at 52–77 (GDSSTSADVPTAGSGNQVPDSAASTA) shows a compositional bias: polar residues. The next 3 membrane-spanning stretches (helical) occupy residues 370 to 390 (WGWSIIVLTVIIKLAFFPLSA), 436 to 456 (LGGCLPILVQMPVFLALYWVL), and 514 to 534 (PIIFTFFFLWFPAGLVLYWVV).

This sequence belongs to the OXA1/ALB3/YidC family. Type 1 subfamily. As to quaternary structure, interacts with the Sec translocase complex via SecD. Specifically interacts with transmembrane segments of nascent integral membrane proteins during membrane integration.

It is found in the cell inner membrane. In terms of biological role, required for the insertion and/or proper folding and/or complex formation of integral membrane proteins into the membrane. Involved in integration of membrane proteins that insert both dependently and independently of the Sec translocase complex, as well as at least some lipoproteins. Aids folding of multispanning membrane proteins. This is Membrane protein insertase YidC from Azotobacter vinelandii (strain DJ / ATCC BAA-1303).